The sequence spans 724 residues: Degenerin mec-10 (724 aa).

Over residues 1 to 15 (MNRNPRMSKFQPNPR) the composition is skewed to polar residues. Residues 1-22 (MNRNPRMSKFQPNPRSRSRFQD) form a disordered region. At 1–122 (MNRNPRMSKF…GQAPNSLYRA (122 aa)) the chain is on the cytoplasmic side. A helical transmembrane segment spans residues 123 to 143 (AWVFLLLICAIQFINQAVAVI). Residues 144–684 (QKYQKMDKIT…FGGHLGLWSG (541 aa)) lie on the Extracellular side of the membrane. The tract at residues 229-265 (KRGAGEKGTFEPANSACECDEEDGSNECEERSTEKPS) is disordered. A compositionally biased stretch (acidic residues) spans 246–255 (ECDEEDGSNE). The span at 256–265 (CEERSTEKPS) shows a compositional bias: basic and acidic residues. 5 N-linked (GlcNAc...) asparagine glycosylation sites follow: asparagine 293, asparagine 369, asparagine 463, asparagine 605, and asparagine 624. The helical transmembrane segment at 685-705 (VSVMTCCEFVCLAFELIYMAI) threads the bilayer. At 706–724 (AHHINQQRIRRRENAANEY) the chain is on the cytoplasmic side.

It belongs to the amiloride-sensitive sodium channel (TC 1.A.6) family. In terms of assembly, component of a non-voltage-gated amiloride-sensitive cation channel complex (also called the degenerin channel complex) composed of at least the mec-2, mec-4, mec-6 and mec-10 subunits; the complex mediates mechanotransduction in touch cells. Interacts with mec-4 and mec-6.

The protein resides in the cell membrane. Functionally, subunit of an amiloride-sensitive cation channel (degenerin channel complex) permeable for sodium, potassium, lithium and N-methylglucamine, and required for mechanosensory transduction (touch sensitivity). Negatively regulates the turning step of male mating behavior. In Caenorhabditis elegans, this protein is Degenerin mec-10.